The following is a 242-amino-acid chain: Type III pantothenate kinase (242 aa).

7 to 14 (DLGNSRFK) lines the ATP pocket. Substrate is bound by residues Tyr-91 and 98–101 (GVDR). Residue Asp-100 is the Proton acceptor of the active site. Thr-121 is an ATP binding site. Thr-171 is a substrate binding site.

Belongs to the type III pantothenate kinase family. As to quaternary structure, homodimer. NH4(+) is required as a cofactor. K(+) serves as cofactor.

The protein localises to the cytoplasm. It carries out the reaction (R)-pantothenate + ATP = (R)-4'-phosphopantothenate + ADP + H(+). Its pathway is cofactor biosynthesis; coenzyme A biosynthesis; CoA from (R)-pantothenate: step 1/5. In terms of biological role, catalyzes the phosphorylation of pantothenate (Pan), the first step in CoA biosynthesis. This chain is Type III pantothenate kinase, found in Xylella fastidiosa (strain 9a5c).